Here is a 691-residue protein sequence, read N- to C-terminus: Elongation factor G (691 aa).

Residues 8–282 (ERVRNIGIAA…AVVNYLPAPV (275 aa)) form the tr-type G domain. GTP is bound by residues 17 to 24 (AHIDAGKT), 81 to 85 (DTPGH), and 135 to 138 (NKMD).

It belongs to the TRAFAC class translation factor GTPase superfamily. Classic translation factor GTPase family. EF-G/EF-2 subfamily.

The protein localises to the cytoplasm. Functionally, catalyzes the GTP-dependent ribosomal translocation step during translation elongation. During this step, the ribosome changes from the pre-translocational (PRE) to the post-translocational (POST) state as the newly formed A-site-bound peptidyl-tRNA and P-site-bound deacylated tRNA move to the P and E sites, respectively. Catalyzes the coordinated movement of the two tRNA molecules, the mRNA and conformational changes in the ribosome. The polypeptide is Elongation factor G (Prochlorococcus marinus (strain NATL1A)).